Reading from the N-terminus, the 248-residue chain is Triosephosphate isomerase (248 aa).

Position 12 (K12) interacts with substrate. H94 (electrophile) is an active-site residue. Residue E165 is the Proton acceptor of the active site.

The protein belongs to the triosephosphate isomerase family. In terms of assembly, homodimer.

The enzyme catalyses D-glyceraldehyde 3-phosphate = dihydroxyacetone phosphate. It functions in the pathway carbohydrate biosynthesis; gluconeogenesis. The protein operates within carbohydrate degradation; glycolysis; D-glyceraldehyde 3-phosphate from glycerone phosphate: step 1/1. This Bombyx mori (Silk moth) protein is Triosephosphate isomerase (Tpi).